The following is an 81-amino-acid chain: Small ribosomal subunit protein uS17 (81 aa).

The protein belongs to the universal ribosomal protein uS17 family. Part of the 30S ribosomal subunit.

In terms of biological role, one of the primary rRNA binding proteins, it binds specifically to the 5'-end of 16S ribosomal RNA. In Hyphomonas neptunium (strain ATCC 15444), this protein is Small ribosomal subunit protein uS17.